Here is a 440-residue protein sequence, read N- to C-terminus: MFIILKFLISFFLICNFFNYNDHFASGQTLPPGFCPSPLIYRNSTNRQNDIENGYLFIGQTNCTSPCPSLIFSENEWHRVYNMSLIAGTISMFALIFLIITYSPLVNKYNGYTRHTVGILFLFCGIFLTVTTDGRQLWDIDLGFEKYCPEPGRFARQSDTKCLVTAIFFQYGCVTSILWWAAISVDLWMTIRKVKISKLQFITYAVILNIITLILTFAPIASKQYGYGEAAIGCWLMDLKYQVGYFWAPVGFCLCVGCVSIVLIIREIYKVSDAIKKKLLAKHLKPLMLIILMLSEFIYMFIFYSYTTSRRGHYHDVVEKYIRCLFINASNPSICEVDVSISSPAHFFFHFCMRLMGIEGLIFFGFTRQTKRIWLRSFWLNNSFIKKLIPSLSSISSDEKTSNSSHRTTRGCRETEFGESIEQSNDPEHFIELSGVDSKN.

The N-terminal stretch at 1 to 27 is a signal peptide; sequence MFIILKFLISFFLICNFFNYNDHFASG. At 28–85 the chain is on the extracellular side; sequence QTLPPGFCPSPLIYRNSTNRQNDIENGYLFIGQTNCTSPCPSLIFSENEWHRVYNMSL. 3 N-linked (GlcNAc...) asparagine glycosylation sites follow: Asn43, Asn62, and Asn82. The chain crosses the membrane as a helical span at residues 86–106; it reads IAGTISMFALIFLIITYSPLV. Topologically, residues 107–110 are cytoplasmic; sequence NKYN. Residues 111–131 form a helical membrane-spanning segment; that stretch reads GYTRHTVGILFLFCGIFLTVT. Residues 132-162 lie on the Extracellular side of the membrane; the sequence is TDGRQLWDIDLGFEKYCPEPGRFARQSDTKC. The helical transmembrane segment at 163–183 threads the bilayer; that stretch reads LVTAIFFQYGCVTSILWWAAI. The Cytoplasmic segment spans residues 184-200; the sequence is SVDLWMTIRKVKISKLQ. Residues 201 to 221 form a helical membrane-spanning segment; sequence FITYAVILNIITLILTFAPIA. Residues 222-244 are Extracellular-facing; sequence SKQYGYGEAAIGCWLMDLKYQVG. Residues 245 to 265 traverse the membrane as a helical segment; sequence YFWAPVGFCLCVGCVSIVLII. Residues 266 to 285 lie on the Cytoplasmic side of the membrane; it reads REIYKVSDAIKKKLLAKHLK. A helical membrane pass occupies residues 286–306; that stretch reads PLMLIILMLSEFIYMFIFYSY. Residues 307-346 lie on the Extracellular side of the membrane; sequence TTSRRGHYHDVVEKYIRCLFINASNPSICEVDVSISSPAH. Asn328 carries an N-linked (GlcNAc...) asparagine glycan. A helical transmembrane segment spans residues 347 to 367; sequence FFFHFCMRLMGIEGLIFFGFT. Residues 368–440 are Cytoplasmic-facing; it reads RQTKRIWLRS…IELSGVDSKN (73 aa). The segment at 395 to 428 is disordered; it reads ISSDEKTSNSSHRTTRGCRETEFGESIEQSNDPE.

Belongs to the G-protein coupled receptor Fz/Smo family.

It is found in the membrane. This is Frizzled/smoothened-like sans CRD protein D (fscD) from Dictyostelium discoideum (Social amoeba).